Consider the following 310-residue polypeptide: Ribosomal RNA small subunit methyltransferase H (310 aa).

S-adenosyl-L-methionine-binding positions include 32-34 (GGH), aspartate 52, phenylalanine 79, aspartate 100, and glutamine 107.

It belongs to the methyltransferase superfamily. RsmH family.

The protein localises to the cytoplasm. The enzyme catalyses cytidine(1402) in 16S rRNA + S-adenosyl-L-methionine = N(4)-methylcytidine(1402) in 16S rRNA + S-adenosyl-L-homocysteine + H(+). Specifically methylates the N4 position of cytidine in position 1402 (C1402) of 16S rRNA. In Bacillus cereus (strain ATCC 10987 / NRS 248), this protein is Ribosomal RNA small subunit methyltransferase H.